We begin with the raw amino-acid sequence, 251 residues long: VYITNAGDITLSPKGVEMAHVNNVRLYVHGERWTASQPGDWGSQWQVEAPIFVDHGYVSQDCYYPIIKGRSVITNQGFVTAVDLGIRRVNNNWGQAIIRVGSAEASPAAGHPNAVFEFHYDGTFYSPGNGNFSDVYIRSDGRLKINKKELENGALEKVCRLKVYTYDKVKSIKDRSVIKREVGIIAQDLEKELPEAVSKVEVDGSDVLTISNSAVNALLIKAIQEMSEEIKELKTPFFTKIARKISKYFKF.

Residues 134 to 137 (DVYI) are interaction with the receptor-recognizing protein gp38. Positions 139–237 (SDGRLKINKK…EEIKELKTPF (99 aa)) constitute a Peptidase S74 domain.

Belongs to the S16-like long tail fiber protein Gp37 family. Homotrimer. Interacts with the receptor-recognizing protein Gp38. Post-translationally, proteolytic cleavage and release of the chaperone in the host cytosol stabilizes the folded protein.

The protein resides in the virion. Functionally, constitues the trimeric tip of the long tail fiber that mediates the attachment to the host receptor, together with the receptor-recognizing protein Gp38. Its function is as follows. The C-terminal chaperone protein mediates homotrimerization and proper folding of the catalytic trimer. The polypeptide is Long tail fiber protein Gp37 (37) (Escherichia coli (Bacteriophage Ox2)).